We begin with the raw amino-acid sequence, 438 residues long: Methylenetetrahydrofolate--tRNA-(uracil-5-)-methyltransferase TrmFO (438 aa).

G9–G14 is an FAD binding site.

The protein belongs to the MnmG family. TrmFO subfamily. FAD is required as a cofactor.

It localises to the cytoplasm. The enzyme catalyses uridine(54) in tRNA + (6R)-5,10-methylene-5,6,7,8-tetrahydrofolate + NADH + H(+) = 5-methyluridine(54) in tRNA + (6S)-5,6,7,8-tetrahydrofolate + NAD(+). It carries out the reaction uridine(54) in tRNA + (6R)-5,10-methylene-5,6,7,8-tetrahydrofolate + NADPH + H(+) = 5-methyluridine(54) in tRNA + (6S)-5,6,7,8-tetrahydrofolate + NADP(+). Catalyzes the folate-dependent formation of 5-methyl-uridine at position 54 (M-5-U54) in all tRNAs. This is Methylenetetrahydrofolate--tRNA-(uracil-5-)-methyltransferase TrmFO from Lactobacillus acidophilus (strain ATCC 700396 / NCK56 / N2 / NCFM).